We begin with the raw amino-acid sequence, 521 residues long: Cell adhesion molecule CEACAM1 (521 aa).

An N-terminal signal peptide occupies residues 1 to 34 (MELASAHLHKGQVPWGGLLLTASLLASWSPATTA). The Ig-like V-type domain maps to 35-142 (EVTIEAVPPQ…QATVRFHVHP (108 aa)). Residues 35–428 (EVTIEAVPPQ…GGLSDGAIAG (394 aa)) lie on the Extracellular side of the membrane. The interval 39-142 (EAVPPQVAED…QATVRFHVHP (104 aa)) is required for homophilic binding. N-linked (GlcNAc...) asparagine glycans are attached at residues Asn71, Asn89, Asn104, Asn148, Asn152, Asn199, Asn206, Asn210, Asn226, Asn258, Asn290, Asn294, Asn304, Asn317, Asn333, and Asn375. 3 Ig-like C2-type domains span residues 147–234 (PNIT…FSLN), 239–319 (PDTP…KNIT), and 323–411 (PVTQ…IKLD). Cys167 and Cys217 are joined by a disulfide. Cys261 and Cys301 are oxidised to a cystine. An intrachain disulfide couples Cys346 to Cys394. A helical membrane pass occupies residues 429 to 447 (IVIGVVAGVALIAGLAYFL). Positions 445–457 (YFLYSRKSGGGSD) are interaction with calmodulin. The tract at residues 447–521 (LYSRKSGGGS…ETVYSEVKKK (75 aa)) is interaction with FLNA. Over 448–521 (YSRKSGGGSD…ETVYSEVKKK (74 aa)) the chain is Cytoplasmic. Residues 455 to 521 (GSDQRDLTEH…ETVYSEVKKK (67 aa)) form a disordered region. The span at 457 to 466 (DQRDLTEHKP) shows a compositional bias: basic and acidic residues. The span at 467-481 (STSNHNLAPSDNSPN) shows a compositional bias: polar residues. A required for interaction with PTPN11 and PTPN6 and for control of phosphorylation level region spans residues 484 to 521 (DDVAYTVLNFNSQQPNRPTSAPSSPRATETVYSEVKKK). Tyr488 is subject to Phosphotyrosine; by SRC, LCK, INSR and EGFR. Positions 491-514 (LNFNSQQPNRPTSAPSSPRATETV) are enriched in polar residues. Ser503 is subject to Phosphoserine. Tyr515 carries the phosphotyrosine; by INSR, SRC and LCK modification. Residues 515–518 (YSEV) are essential for interaction with PTPN11 and PTPN6.

This sequence belongs to the immunoglobulin superfamily. CEA family. As to quaternary structure, (Microbial infection) Interacts with MHV S1 spike glycoprotein. Monomer. Oligomer. Heterodimer. Homodimer. Cis-dimer/oligomer (via Ig-like C2-type and/or via cytoplasmic domains); induced by trans-homophilic cell adhesion through an allosteric mechanism transmitted by the Ig-like V-type domain, and is regulated by intracellular calcium and calmodulin. Interacts (via cytoplasmic domain) with calmodulin in a calcium dependent manner; reduces homophilic cell adhesion through dissociation of dimer. Isoform 1 interacts (via cytoplasmic domain) with PTPN11 (preferentially) and PTPN6; cis-homodimer form is preferred; this interaction is decreased by formation of isoform 1 / isoform 2 cis-heterodimers and is dependent on the monomer/dimer equilibrium; this interaction is phosphorylation-dependent. Isoform 1 interacts with LYN. Isoform 1 interacts (via cytoplasmic domain) with SRC (via SH2 domain); this interaction is regulated by trans-homophilic cell adhesion. Isoform 1 interacts with LCK; mediates phosphorylation at Tyr-488 and Tyr-515 resulting in PTPN6 association. Isoform 1 interacts with PTPN6; this interaction is phosphorylation-dependent and causes a profound decrease in TCR stimulation-induced CD247 and ZAP70 phosphorylation. Isoform 1 interacts with TCR/CD3 complex through TCR beta chain and CD3E; colocalizes at the cell surface and upon stimulation of the TCR/CD3 complex recruits PTPN6 in the TCR/CD3 complex, resulting in dephosphorylation of CD247 and ZAP70. Isoform 1 interacts (via cytoplasmic domain) with SHC1 (via SH2 domain); SHC1 mediates interaction with INSR or EGFR in a Ser-503 phosphorylation-dependent manner. Isoform 1 interacts with EGFR; the interaction is indirect. Isoform 1 interacts with CSF3R; down-regulates the CSF3R-STAT3 pathway through recruitment of PTPN6 that dephosphorylates CSF3R. Isoform 1 (phosphorylated form) interacts with TLR4 and SYK; recruits PTPN6 that dephosphorylates SYK, reducing the production of reactive oxygen species (ROS) and lysosome disruption, leading to a reduction of the inflammasome activity. Isoform 1 interacts with FLNA; inhibits cell migration and cell scattering by interfering with the interaction of FLNA with RALA. Isoform 1 interacts (via cytoplasmic domain) with PXN; the interaction is phosphotyrosyl-dependent. Isoform 1 interacts with KLRK1; recruits PTPN6 that dephosphorylates VAV1. Isoform 1 interacts with CEACAM8. Isoform 1 interacts with FASN; this interaction is insulin and phosphorylation-dependent; reduces fatty-acid synthase activity. Interacts (via Ig-like V-type) with HAVCR2 (via Ig-like V-type); facilitates the maturation and cell surface expression of HAVCR2 thereby regulating T-cell tolerance induction. Isoform 2 interacts (via the cytoplasmic domain) with ANXA2; this interaction is regulated by phosphorylation and appears in the AIIt complex. Interacts (via Lewis X moieties) with CD209 (via C-type lectin domain); this interaction is regulated by the glycosylation pattern of CEACAM1 on cell types and regulates contact between dendritic cells and neutrophils. In terms of processing, phosphorylated on serine and tyrosine. Isoform 1 is phosphorylated on tyrosine by Src family kinases like SRC and LCK and by receptor like CSF3R, EGFR and INSR upon stimulation. Phosphorylated at Ser-503; mediates activity. Phosphorylated at Tyr-488; regulates activity. Phosphorylated at Tyr-488 by EGFR and INSR upon stimulation; this phosphorylation is Ser-503-phosphorylation-dependent; mediates cellular internalization; increases interaction with FASN. Phosphorylated at Tyr-488 and Tyr-515 by LCK; mediates PTPN6 association and is regulated by homophilic ligation of CEACAM1 in the absence of T-cell activation. Phosphorylated at Tyr-515; mediates interaction with PTPN11. Post-translationally, phosphorylated on serine and threonine. Expressed in granulocytes, lymphocytes, granulocytes, B cells, and T-cells. Expressed in bone. Highly expressed in liver and femur. Highly expressed in neutrophils, and to a lesser extent inmonocytes, and macrophages. Slightly higher expressed in peripheral blood neutrophils (PBNs). Intestinal T-cells predominantly express isoform 2 while extraintestinal T-cells mainly express isoform 1. Expressed in small intestine and colon.

Its subcellular location is the cell membrane. The protein localises to the lateral cell membrane. It is found in the apical cell membrane. The protein resides in the basal cell membrane. It localises to the cell junction. Its subcellular location is the adherens junction. The protein localises to the cytoplasmic vesicle. It is found in the secretory vesicle. The protein resides in the cell projection. It localises to the microvillus membrane. Functionally, cell adhesion protein that mediates homophilic cell adhesion in a calcium-independent manner. Plays a role as coinhibitory receptor in immune response, insulin action and also functions as an activator during angiogenesis. Its coinhibitory receptor function is phosphorylation- and PTPN6 -dependent, which in turn, suppress signal transduction of associated receptors by dephosphorylation of their downstream effectors. Plays a role in immune response, of T-cells, natural killer (NK) and neutrophils. Upon TCR/CD3 complex stimulation, inhibits TCR-mediated cytotoxicity by blocking granule exocytosis by mediating homophilic binding to adjacent cells, allowing interaction with and phosphorylation by LCK and interaction with the TCR/CD3 complex which recruits PTPN6 resulting in dephosphorylation of CD247 and ZAP70. Also inhibits T-cell proliferation and cytokine production through inhibition of JNK cascade and plays a crucial role in regulating autoimmunity and anti-tumor immunity by inhibiting T-cell through its interaction with HAVCR2. Upon natural killer (NK) cells activation, inhibit KLRK1-mediated cytolysis of CEACAM1-bearing tumor cells by trans-homophilic interactions with CEACAM1 on the target cell and lead to cis-interaction between CEACAM1 and KLRK1, allowing PTPN6 recruitment and then VAV1 dephosphorylation. Upon neutrophils activation negatively regulates IL1B production by recruiting PTPN6 to a SYK-TLR4-CEACAM1 complex, that dephosphorylates SYK, reducing the production of reactive oxygen species (ROS) and lysosome disruption, which in turn, reduces the activity of the inflammasome. Down-regulates neutrophil production by acting as a coinhibitory receptor for CSF3R by downregulating the CSF3R-STAT3 pathway through recruitment of PTPN6 that dephosphorylates CSF3R. Also regulates insulin action by promoting INS clearance and regulating lipogenesis in liver through regulating insulin signaling. Upon INS stimulation, undergoes phosphorylation by INSR leading to INS clearance by increasing receptor-mediated insulin endocytosis. This inernalization promotes interaction with FASN leading to receptor-mediated insulin degradation and to reduction of FASN activity leading to negative regulation of fatty acid synthesis. INSR-mediated phosphorylation also provokes a down-regulation of cell proliferation through SHC1 interaction resulting in decrease coupling of SHC1 to the MAPK3/ERK1-MAPK1/ERK2 and phosphatidylinositol 3-kinase pathways. Functions as activator in angiogenesis by promoting blood vessel remodeling through endothelial cell differentiation and migration and in arteriogenesis by increasing the number of collateral arteries and collateral vessel calibers after ischemia. Also regulates vascular permeability through the VEGFR2 signaling pathway resulting in control of nitric oxide production. Down-regulates cell growth in response to EGF through its interaction with SHC1 that mediates interaction with EGFR resulting in decrease coupling of SHC1 to the MAPK3/ERK1-MAPK1/ERK2 pathway. Negatively regulates platelet aggregation by decreasing platelet adhesion on type I collagen through the GPVI-FcRgamma complex. Inhibits cell migration and cell scattering through interaction with FLNA; interferes with the interaction of FLNA with RALA. Mediates bile acid transport activity in a phosphorylation dependent manner. Negatively regulates osteoclastogenesis. Cell adhesion protein that mediates homophilic cell adhesion in a calcium-independent manner. Promotes populations of T-cells regulating IgA production and secretion associated with control of the commensal microbiota and resistance to enteropathogens. In terms of biological role, (Microbial infection) In case of murine coronavirus (MHV) infection, serves as receptor for MHV S1 spike glycoprotein. This Mus musculus (Mouse) protein is Cell adhesion molecule CEACAM1.